A 233-amino-acid polypeptide reads, in one-letter code: Phosphatidylserine decarboxylase proenzyme (233 aa).

The active-site Schiff-base intermediate with substrate; via pyruvic acid is Ser-201. Ser-201 is modified (pyruvic acid (Ser); by autocatalysis).

It belongs to the phosphatidylserine decarboxylase family. PSD-A subfamily. As to quaternary structure, heterodimer of a large membrane-associated beta subunit and a small pyruvoyl-containing alpha subunit. The cofactor is pyruvate. Post-translationally, is synthesized initially as an inactive proenzyme. Formation of the active enzyme involves a self-maturation process in which the active site pyruvoyl group is generated from an internal serine residue via an autocatalytic post-translational modification. Two non-identical subunits are generated from the proenzyme in this reaction, and the pyruvate is formed at the N-terminus of the alpha chain, which is derived from the carboxyl end of the proenzyme. The post-translation cleavage follows an unusual pathway, termed non-hydrolytic serinolysis, in which the side chain hydroxyl group of the serine supplies its oxygen atom to form the C-terminus of the beta chain, while the remainder of the serine residue undergoes an oxidative deamination to produce ammonia and the pyruvoyl prosthetic group on the alpha chain.

It localises to the cell membrane. The catalysed reaction is a 1,2-diacyl-sn-glycero-3-phospho-L-serine + H(+) = a 1,2-diacyl-sn-glycero-3-phosphoethanolamine + CO2. Its pathway is phospholipid metabolism; phosphatidylethanolamine biosynthesis; phosphatidylethanolamine from CDP-diacylglycerol: step 2/2. Catalyzes the formation of phosphatidylethanolamine (PtdEtn) from phosphatidylserine (PtdSer). The polypeptide is Phosphatidylserine decarboxylase proenzyme (Mycolicibacterium vanbaalenii (strain DSM 7251 / JCM 13017 / BCRC 16820 / KCTC 9966 / NRRL B-24157 / PYR-1) (Mycobacterium vanbaalenii)).